The following is a 93-amino-acid chain: Large ribosomal subunit protein uL23cz/uL23cy (93 aa).

The protein belongs to the universal ribosomal protein uL23 family. Part of the 50S ribosomal subunit.

It is found in the plastid. Its subcellular location is the chloroplast. Its function is as follows. Binds to 23S rRNA. The sequence is that of Large ribosomal subunit protein uL23cz/uL23cy (rpl23-A) from Acorus calamus (Sweet flag).